We begin with the raw amino-acid sequence, 560 residues long: MIPTMTSAGWAPGVVQFREYQRRWLRGDVLAGLTVAAYLIPQAMAYATVAGLPPAAGLWASIAPLAIYALLGSSRQLSIGPESATALMTAAVLAPMAAGDLRRYAVLAATLGLLVGLICLLAGTARLGFLASLRSRPVLVGYMAGIALVMISSQLGTITGTSVEGNEFFSEVHSFATSVTRVHWPTFVLAMSVLALLTMLTRWAPRAPGPIIAVLAATMLVAVMSLDAKGIAIVGRIPSGLPTPGVPPVSVEDLRALIIPAAGIAIVTFTDGVLTARAFAARRGQEVNANAELRAVGACNIAAGLTHGFPVSSSSSRTALADVVGGRTQLYSLIALGLVVIVMVFASGLLAMFPIAALGALVVYAALRLIDLSEFRRLARFRRSELMLALATTAAVLGLGVFYGVLAAVALSILELLRRVAHPHDSVLGFVPGIAGMHDIDDYPQAKRVPGLVVYRYDAPLCFANAEDFRRRALTVVDQDPGQVEWFVLNAESNVEVDLTALDALDQLRTELLRRGIVFAMARVKQDLRESLRAASLLDKIGEDHIFMTLPTAVQAFRRR.

The tract at residues 1-436 (MIPTMTSAGW…VLGFVPGIAG (436 aa)) is required for sulfate transport in E.coli. A run of 11 helical transmembrane segments spans residues 29–49 (VLAGLTVAAYLIPQAMAYATV), 51–71 (GLPPAAGLWASIAPLAIYALL), 79–99 (IGPESATALMTAAVLAPMAAG), 105–125 (AVLAATLGLLVGLICLLAGTA), 138–158 (VLVGYMAGIALVMISSQLGTI), 184–204 (WPTFVLAMSVLALLTMLTRWA), 207–227 (APGPIIAVLAATMLVAVMSLD), 256–276 (ALIIPAAGIAIVTFTDGVLTA), 333–353 (LIALGLVVIVMVFASGLLAMF), 355–375 (IAALGALVVYAALRLIDLSEF), and 394–414 (AAVLGLGVFYGVLAAVALSIL). The STAS domain occupies 442–557 (DYPQAKRVPG…MTLPTAVQAF (116 aa)).

The protein belongs to the SLC26A/SulP transporter (TC 2.A.53) family.

It localises to the cell membrane. Functionally, expression in E.coli induces sulfate uptake during early- to mid-log phase growth. Uptake is maximal at pH 6.0, is sulfate-specific, requires E.coli CysA and the transmembrane segment but not the STAS domain of the protein. The protein is Probable sulfate transporter Rv1739c of Mycobacterium tuberculosis (strain ATCC 25618 / H37Rv).